The sequence spans 243 residues: GTP cyclohydrolase 1 type 2 (243 aa).

A divalent metal cation is bound by residues His-63, His-64, Asp-102, His-209, and Glu-213.

The protein belongs to the GTP cyclohydrolase I type 2/NIF3 family. In terms of assembly, homohexamer.

The catalysed reaction is GTP + H2O = 7,8-dihydroneopterin 3'-triphosphate + formate + H(+). The protein operates within cofactor biosynthesis; 7,8-dihydroneopterin triphosphate biosynthesis; 7,8-dihydroneopterin triphosphate from GTP: step 1/1. In terms of biological role, converts GTP to dihydroneopterin triphosphate. Is not active with GDP, GMP, ATP, CTP or UTP as substrate. This is GTP cyclohydrolase 1 type 2 from Helicobacter pylori (strain ATCC 700392 / 26695) (Campylobacter pylori).